Here is a 210-residue protein sequence, read N- to C-terminus: Keratin-associated protein 4-9 (210 aa).

28 repeat units span residues cysteine 24–serine 28, cysteine 29–threonine 33, cysteine 34–threonine 38, cysteine 39–serine 43, cysteine 44–serine 48, cysteine 49–glutamine 53, cysteine 54–valine 58, cysteine 59–threonine 63, cysteine 69–threonine 73, cysteine 74–threonine 78, cysteine 84–serine 88, cysteine 89–glutamine 93, cysteine 94–alanine 98, cysteine 99–threonine 103, cysteine 104–serine 108, cysteine 109–threonine 113, cysteine 114–arginine 118, cysteine 119–serine 123, cysteine 124–serine 128, cysteine 129–serine 133, cysteine 134–glutamine 138, cysteine 139–valine 143, cysteine 144–asparagine 148, cysteine 149–serine 153, cysteine 159–serine 163, cysteine 164–serine 168, cysteine 169–cysteine 173, and cysteine 174–proline 178. The segment at cysteine 24–proline 178 is 29 X 5 AA repeats of C-C-[RQVHIEK]-[SPTR]-[VSTQCRNP].

It belongs to the KRTAP type 4 family. As to quaternary structure, interacts with hair keratins. As to expression, expressed in the hair follicles.

In the hair cortex, hair keratin intermediate filaments are embedded in an interfilamentous matrix, consisting of hair keratin-associated proteins (KRTAP), which are essential for the formation of a rigid and resistant hair shaft through their extensive disulfide bond cross-linking with abundant cysteine residues of hair keratins. The matrix proteins include the high-sulfur and high-glycine-tyrosine keratins. The chain is Keratin-associated protein 4-9 (KRTAP4-9) from Homo sapiens (Human).